A 566-amino-acid polypeptide reads, in one-letter code: DBIRD complex subunit ZNF326 (566 aa).

2 disordered regions span residues 19–81 (HCGV…ESYD) and 145–180 (RPGFMEDRGRESYSSYSSFSSPHMKPAPVGSRGRGT). Gly residues predominate over residues 59-73 (SHGGGGGGGGGGGNR). The segment covering 156–165 (SYSSYSSFSS) has biased composition (low complexity). Residues 240-263 (KRKMMPQPYNKPGGTFIKKPKMTK) carry the Bipartite nuclear localization signal motif. Positions 314-347 (FGDSKGEGKSEEEEKRRIEARREKQRRRREKNSE) are disordered. Residues 317–335 (SKGEGKSEEEEKRRIEARR) show a composition bias toward basic and acidic residues. C2H2 AKAP95-type zinc fingers lie at residues 359 to 381 (CSFCKFRTFEEKEIESHLESAAH) and 452 to 475 (CSACSVYVPALHSSVQQHLKSPDH). The disordered stretch occupies residues 516 to 566 (PFEINDQAQEQQTEEEDKAEEPAEGEEEEEEEEEEETEEQTDFTLDHTEDN). The span at 527–556 (QTEEEDKAEEPAEGEEEEEEEEEEETEEQT) shows a compositional bias: acidic residues.

This sequence belongs to the AKAP95 family. As to quaternary structure, component of the DBIRD complex.

It localises to the nucleus. Core component of the DBIRD complex, a multiprotein complex that acts at the interface between core mRNP particles and RNA polymerase II (RNAPII) and integrates transcript elongation with the regulation of alternative splicing. The protein is DBIRD complex subunit ZNF326 (ZNF326) of Gallus gallus (Chicken).